A 273-amino-acid polypeptide reads, in one-letter code: Chondrolectin (273 aa).

Positions 1-21 (MIRIASLLLGAALLCAQGAFA) are cleaved as a signal peptide. Over 22–216 (RRVVSGQKVC…VVTEAGIIPN (195 aa)) the chain is Extracellular. A C-type lectin domain is found at 35-179 (VKHPCYKMAY…CNMKHNYICK (145 aa)). 2 cysteine pairs are disulfide-bonded: cysteine 61/cysteine 178 and cysteine 144/cysteine 170. Asparagine 86 carries an N-linked (GlcNAc...) asparagine glycan. Residues 217 to 237 (LIYVIIPTIPLLLLILVALGT) form a helical membrane-spanning segment. At 238-273 (CCFQMLHKSKGRSKTSPNQSTLWISKSTRKESGMEV) the chain is on the cytoplasmic side. The disordered stretch occupies residues 247 to 273 (KGRSKTSPNQSTLWISKSTRKESGMEV). The span at 251-263 (KTSPNQSTLWISK) shows a compositional bias: polar residues.

As to quaternary structure, interacts with RABGGTB. In terms of tissue distribution, in adult mice preferentially expressed in skeletal muscle, testis, brain, and lung. Expressed in striated muscle (at protein level). Expressed in spinal cord. Detected in spinal cord fast motor neurons (at protein level).

The protein resides in the membrane. Functionally, may play a role in the development of the nervous system such as in neurite outgrowth and elongation. May be involved in motor axon growth and guidance. The chain is Chondrolectin (Chodl) from Mus musculus (Mouse).